We begin with the raw amino-acid sequence, 595 residues long: Threonine dehydratase 2 biosynthetic, chloroplastic (595 aa).

The transit peptide at 1–51 (MEFLCLAPTRSFSTNPKLTKSIPSDHTSTTSRIFTYQNMRGSTMRPLALPL) directs the protein to the chloroplast. Lysine 143 carries the N6-(pyridoxal phosphate)lysine modification. ACT-like domains lie at 420-492 (ALLA…NLSH) and 514-585 (IFGE…LDNY).

Belongs to the serine/threonine dehydratase family. In terms of assembly, homotetramer. The cofactor is pyridoxal 5'-phosphate. Post-translationally, proteolytically cleaved by a chymotrypsin-like digestive protease in the midgut of the lepidopteran insects to remove the C-terminal regulatory domain, which allows efficient metabolizing of threonine in the presence of high isoleucine levels in the gut. In terms of tissue distribution, expressed in floral buds, 8-9 mm long flowers 1 to 2 days before anthesis, open flowers and floral organs including sepals, petals, stamens and carpels of 8-9 mm flowers (at protein level). Expressed in very early floral meristems of the anantha. Over 500-fold expression in mature flowers compared to leaves. Expressed in sepals, petals, stamens and carpels of the mature flower. In sepals, mostly expressed in the abaxial mesophyll cells and in petals in parenchymal cells. Not expressed in epidermal or vascular tissues of sepals and petals. In stamens, expressed in parenchymal cells of the connective and lobes, but not expressed in differentiated tissues such as tapetum (TP), stomium (SM), or pollen grains (PG). Not expressed in roots or seeds. High level of expression in immature flower buds, unopened flowers and opened flowers. Not expressed in unstressed leaves, root, stem or petiole.

The protein resides in the plastid. The protein localises to the chloroplast. The catalysed reaction is L-threonine = 2-oxobutanoate + NH4(+). The enzyme catalyses L-serine = pyruvate + NH4(+). The protein operates within amino-acid biosynthesis; L-isoleucine biosynthesis; 2-oxobutanoate from L-threonine: step 1/1. With respect to regulation, threonine dehydratase 2 biosynthetic, chloroplastic: Strongly inhibited by 1 mM isoleucine. Processed threonine dehydratase 2: Not inhibited by isoleucine. Not required for normal growth and development of the plant. Its function is as follows. Involved in defense against lepidopteran, but not coleopteran herbivore insects. Acts in the insect gut to degrade threonine, which is an essential and limiting nutrient for the growth of lepidopteran larvae. Active against both L-threonine and L-serine. The sequence is that of Threonine dehydratase 2 biosynthetic, chloroplastic from Solanum lycopersicum (Tomato).